The following is a 718-amino-acid chain: Scarecrow-like protein 9 (718 aa).

Positions 305–338 (VEKKKASDAQGGKRRARGRGRGRGRGGGGGQNGK) are disordered. Over residues 316-328 (GKRRARGRGRGRG) the composition is skewed to basic residues. In terms of domain architecture, GRAS spans 335-713 (QNGKKEVVDL…RTVMALSVWK (379 aa)). Residues 342–402 (VDLRSLLIHC…EARLAGTGSQ (61 aa)) form a leucine repeat I (LRI) region. Residues 421–484 (HQLFLACCPF…YGSPKVRITG (64 aa)) form a VHIID region. A VHIID motif is present at residues 452–456 (VHVID). The leucine repeat II (LRII) stretch occupies residues 500–532 (ETGQRLAAYAKLFGVPFEYKAIAKKWDAIQLED). The segment at 541-635 (TVVNCLYRAE…MEVFGREALN (95 aa)) is PFYRE. The tract at residues 638–713 (ACEGWERVER…RTVMALSVWK (76 aa)) is SAW.

The protein belongs to the GRAS family. In terms of tissue distribution, expressed in cotyledons, leaves and flowers, and in the elongation zone in root.

It localises to the nucleus. Probable transcription factor involved in plant development. This is Scarecrow-like protein 9 (SCL9) from Arabidopsis thaliana (Mouse-ear cress).